Here is a 433-residue protein sequence, read N- to C-terminus: KICSTOR complex protein ITFG2 (433 aa).

The stretch at 19-48 (FPHAICLGDVDNDTLNELVVGDTSGKVSVY) is one FG-GAP 1; atypical repeat. At Ser104 the chain carries Phosphoserine. An FG-GAP 2; atypical repeat occupies 126 to 155 (NTKVMLISDIDGDGCRELVVGYTDRVVRAF). Ser220 bears the Phosphoserine mark.

As to quaternary structure, part of the KICSTOR complex composed of KPTN, ITFG2, KICS2 and SZT2. SZT2 probably serves as a link between the other three proteins in the KICSTOR complex and may mediate the direct interaction with the GATOR complex via GATOR1. The KICSTOR complex interacts directly with the GATOR1 complex and most probably indirectly with the GATOR2 complex in an amino acid-independent manner.

The protein localises to the lysosome membrane. As part of the KICSTOR complex functions in the amino acid-sensing branch of the TORC1 signaling pathway. Recruits, in an amino acid-independent manner, the GATOR1 complex to the lysosomal membranes and allows its interaction with GATOR2 and the RAG GTPases. Functions upstream of the RAG GTPases and is required to negatively regulate mTORC1 signaling in absence of amino acids. In absence of the KICSTOR complex mTORC1 is constitutively localized to the lysosome and activated. The KICSTOR complex is also probably involved in the regulation of mTORC1 by glucose. In Pongo abelii (Sumatran orangutan), this protein is KICSTOR complex protein ITFG2.